The chain runs to 117 residues: Immunoglobulin heavy variable 1-69-2 (117 aa).

The N-terminal stretch at 1–19 is a signal peptide; it reads MDCTWRILLLVAAATGTHA. Residues 20–44 form a framework-1 region; sequence EVQLVQSGAEVKKPGATVKISCKVS. The region spanning 20-117 is the Ig-like domain; sequence EVQLVQSGAE…EDTAVYYCAT (98 aa). An intrachain disulfide couples Cys41 to Cys115. Residues 45–52 are complementarity-determining-1; it reads GYTFTDYY. The tract at residues 53 to 69 is framework-2; the sequence is MHWVQQAPGKGLEWMGL. The segment at 70–77 is complementarity-determining-2; sequence VDPEDGET. The segment at 78-115 is framework-3; the sequence is IYAEKFQGRVTITADTSTDTAYMELSSLRSEDTAVYYC. A complementarity-determining-3 region spans residues 116 to 117; sequence AT.

Immunoglobulins are composed of two identical heavy chains and two identical light chains; disulfide-linked.

The protein localises to the secreted. The protein resides in the cell membrane. V region of the variable domain of immunoglobulin heavy chains that participates in the antigen recognition. Immunoglobulins, also known as antibodies, are membrane-bound or secreted glycoproteins produced by B lymphocytes. In the recognition phase of humoral immunity, the membrane-bound immunoglobulins serve as receptors which, upon binding of a specific antigen, trigger the clonal expansion and differentiation of B lymphocytes into immunoglobulins-secreting plasma cells. Secreted immunoglobulins mediate the effector phase of humoral immunity, which results in the elimination of bound antigens. The antigen binding site is formed by the variable domain of one heavy chain, together with that of its associated light chain. Thus, each immunoglobulin has two antigen binding sites with remarkable affinity for a particular antigen. The variable domains are assembled by a process called V-(D)-J rearrangement and can then be subjected to somatic hypermutations which, after exposure to antigen and selection, allow affinity maturation for a particular antigen. The sequence is that of Immunoglobulin heavy variable 1-69-2 from Homo sapiens (Human).